The chain runs to 435 residues: Galactose/lactose metabolism regulatory protein GAL80 (435 aa).

Residue Met-1 is modified to N-acetylmethionine.

This sequence to K.lactis GAL80. Monomer.

In terms of biological role, this protein is a negative regulator for the gene expression of the lactose/galactose metabolic genes. It binds to GAL4 and so blocks transcriptional activation by it, in the absence of an inducing sugar. The sequence is that of Galactose/lactose metabolism regulatory protein GAL80 (GAL80) from Saccharomyces cerevisiae (strain ATCC 204508 / S288c) (Baker's yeast).